A 132-amino-acid polypeptide reads, in one-letter code: Flagellar basal body rod protein FlgB (132 aa).

This sequence belongs to the flagella basal body rod proteins family. The basal body constitutes a major portion of the flagellar organelle and consists of a number of rings mounted on a central rod. In Gram-negative bacteria, at least four rings, L, P, S and M are present, whereas Gram-positive bacteria lack the L and P rings. The rod consists of about 26 subunits of FlgG in the distal portion, and FlgB, FlgC and FlgF build up the proximal portion of the rod with about 6 subunits each. Rod assembly occurs by export via the flagellum-specific pathway of its constituent proteins and by their incorporation into the rod structure in the probable order of FlgB, FlgC, FlgF and FlgG. Another protein, FliE, also assembles onto the stable rod structure.

The protein resides in the bacterial flagellum basal body. In terms of biological role, structural component of flagellum, the bacterial motility apparatus. Part of the rod structure of flagellar basal body. This Aeromonas hydrophila protein is Flagellar basal body rod protein FlgB.